The chain runs to 525 residues: GMP synthase [glutamine-hydrolyzing] (525 aa).

One can recognise a Glutamine amidotransferase type-1 domain in the interval 7-207 (RILVIDFGSQ…ITCICRCKSS (201 aa)). The active-site Nucleophile is the Cys84. Residues His181 and Glu183 contribute to the active site. The GMPS ATP-PPase domain occupies 208–400 (WKIANIIDDI…LGIPYDIAYR (193 aa)). Residue 235 to 241 (SGGIDSL) coordinates ATP.

As to quaternary structure, homodimer.

The catalysed reaction is XMP + L-glutamine + ATP + H2O = GMP + L-glutamate + AMP + diphosphate + 2 H(+). It participates in purine metabolism; GMP biosynthesis; GMP from XMP (L-Gln route): step 1/1. Its function is as follows. Catalyzes the synthesis of GMP from XMP. This Blochmanniella pennsylvanica (strain BPEN) protein is GMP synthase [glutamine-hydrolyzing].